Consider the following 156-residue polypeptide: Large ribosomal subunit protein uL11 (156 aa).

A disordered region spans residues 1–20 (MAQSVKTMVEGGKATTGPPI).

This sequence belongs to the universal ribosomal protein uL11 family. In terms of assembly, part of the ribosomal stalk of the 50S ribosomal subunit. Interacts with L10 and the large rRNA to form the base of the stalk. L10 forms an elongated spine to which L12 dimers bind in a sequential fashion forming a multimeric L10(L12)X complex.

Its function is as follows. Forms part of the ribosomal stalk which helps the ribosome interact with GTP-bound translation factors. The sequence is that of Large ribosomal subunit protein uL11 from Thermoplasma acidophilum (strain ATCC 25905 / DSM 1728 / JCM 9062 / NBRC 15155 / AMRC-C165).